Consider the following 783-residue polypeptide: DNA ligase (783 aa).

Residues 42-46 (DAEYD), 91-92 (SL), and Glu-125 each bind NAD(+). Lys-127 (N6-AMP-lysine intermediate) is an active-site residue. Arg-148, Glu-185, Lys-302, and Lys-326 together coordinate NAD(+). Residues Cys-421, Cys-423, Cys-445, and Cys-451 each coordinate Zn(2+). The BRCT domain occupies 705 to 783 (KTDTAVAGKT…EDEWLELVAG (79 aa)).

It belongs to the NAD-dependent DNA ligase family. LigA subfamily. Mg(2+) serves as cofactor. Mn(2+) is required as a cofactor.

It catalyses the reaction NAD(+) + (deoxyribonucleotide)n-3'-hydroxyl + 5'-phospho-(deoxyribonucleotide)m = (deoxyribonucleotide)n+m + AMP + beta-nicotinamide D-nucleotide.. DNA ligase that catalyzes the formation of phosphodiester linkages between 5'-phosphoryl and 3'-hydroxyl groups in double-stranded DNA using NAD as a coenzyme and as the energy source for the reaction. It is essential for DNA replication and repair of damaged DNA. The polypeptide is DNA ligase (Caulobacter vibrioides (strain ATCC 19089 / CIP 103742 / CB 15) (Caulobacter crescentus)).